Consider the following 289-residue polypeptide: 4-diphosphocytidyl-2-C-methyl-D-erythritol kinase (289 aa).

Residue Lys10 is part of the active site. 94–104 (PVAAGLAGGSS) is a binding site for ATP. The active site involves Asp136.

This sequence belongs to the GHMP kinase family. IspE subfamily.

The catalysed reaction is 4-CDP-2-C-methyl-D-erythritol + ATP = 4-CDP-2-C-methyl-D-erythritol 2-phosphate + ADP + H(+). The protein operates within isoprenoid biosynthesis; isopentenyl diphosphate biosynthesis via DXP pathway; isopentenyl diphosphate from 1-deoxy-D-xylulose 5-phosphate: step 3/6. In terms of biological role, catalyzes the phosphorylation of the position 2 hydroxy group of 4-diphosphocytidyl-2C-methyl-D-erythritol. The sequence is that of 4-diphosphocytidyl-2-C-methyl-D-erythritol kinase from Bacillus anthracis (strain CDC 684 / NRRL 3495).